The following is a 238-amino-acid chain: Leucine-rich repeat-containing protein 57 (238 aa).

LRR repeat units follow at residues 39–60, 62–84, 85–106, 108–129, 131–152, 153–175, 176–196, and 201–221; these read NLRT…MGKF, LLKS…CKLK, KLET…FVQL, ALKT…LFKL, NLDV…VSGL, QAIE…SHCP, RLKV…PPSI, and QISL…RDLE.

The sequence is that of Leucine-rich repeat-containing protein 57 (lrrc57) from Xenopus laevis (African clawed frog).